Reading from the N-terminus, the 199-residue chain is MLKKVVYCGVCSLPPEYCEFTGKIRRCKVWLHEHDQELFAQLYGDDKEDVDGVAARLGQSSIGEEREEQLEKKLQKLQAREESKEQRELARKLSSRVVIRREARTKRKCMVVVAGLEVFEIDMKKLAKTFASKFATGCSVSKNVEKKEEVVVQGDIADEVEAYIHALLEEKGMKGVKVEQIDAAKKKKKTPTTTTPPPS.

The region spanning 97-168 is the SUI1 domain; that stretch reads VVIRREARTK…EVEAYIHALL (72 aa).

This sequence belongs to the DENR family. Interacts with the 40S ribosomal subunit.

The protein resides in the cytoplasm. This chain is Translation machinery-associated protein 22 (TMA22), found in Eremothecium gossypii (strain ATCC 10895 / CBS 109.51 / FGSC 9923 / NRRL Y-1056) (Yeast).